Here is a 252-residue protein sequence, read N- to C-terminus: Mediator of RNA polymerase II transcription subunit 4 (252 aa).

Residues 70 to 112 are a coiled coil; that stretch reads KIHQEMQVLEKEVEKRDSDIQQLQKQLKEAEHILATAVYQAKE. Residues 218 to 252 are disordered; the sequence is HSNEFLMESLGPNKENEEDVEVMSTDSSSSSSDSD. Over residues 241 to 252 the composition is skewed to low complexity; it reads STDSSSSSSDSD.

This sequence belongs to the Mediator complex subunit 4 family. As to quaternary structure, component of the Mediator complex.

The protein localises to the nucleus. In terms of biological role, component of the Mediator complex, a coactivator involved in the regulated transcription of nearly all RNA polymerase II-dependent genes. Mediator functions as a bridge to convey information from gene-specific regulatory proteins to the basal RNA polymerase II transcription machinery. Mediator is recruited to promoters by direct interactions with regulatory proteins and serves as a scaffold for the assembly of a functional preinitiation complex with RNA polymerase II and the general transcription factors. This Xenopus tropicalis (Western clawed frog) protein is Mediator of RNA polymerase II transcription subunit 4 (med4).